Reading from the N-terminus, the 544-residue chain is Chaperonin GroEL 2 (544 aa).

Residues 29 to 32 (TLGP), 86 to 90 (DGTTT), Gly413, 479 to 481 (NAA), and Asp495 contribute to the ATP site.

This sequence belongs to the chaperonin (HSP60) family. As to quaternary structure, forms a cylinder of 14 subunits composed of two heptameric rings stacked back-to-back. Interacts with the co-chaperonin GroES.

It localises to the cytoplasm. The catalysed reaction is ATP + H2O + a folded polypeptide = ADP + phosphate + an unfolded polypeptide.. Its function is as follows. Together with its co-chaperonin GroES, plays an essential role in assisting protein folding. The GroEL-GroES system forms a nano-cage that allows encapsulation of the non-native substrate proteins and provides a physical environment optimized to promote and accelerate protein folding. The polypeptide is Chaperonin GroEL 2 (Trichodesmium erythraeum (strain IMS101)).